Consider the following 345-residue polypeptide: Ferrochelatase (345 aa).

Fe cation is bound by residues histidine 215 and glutamate 296.

Belongs to the ferrochelatase family.

The protein localises to the cytoplasm. The catalysed reaction is heme b + 2 H(+) = protoporphyrin IX + Fe(2+). The protein operates within porphyrin-containing compound metabolism; protoheme biosynthesis; protoheme from protoporphyrin-IX: step 1/1. In terms of biological role, catalyzes the ferrous insertion into protoporphyrin IX. The chain is Ferrochelatase from Rhodopseudomonas palustris (strain ATCC BAA-98 / CGA009).